The chain runs to 134 residues: MSSEETKTFTRAEVAKHNTNKDTWLLIHNNIYDVTAFLNEHPGGEEVLIEQAGKDATENFEDVGHSNDARDMMKKYKIGELVESERTSVAQKSEPTWSTEQQTEESSVKSWLVPLVLCLVATLFYKFFFGGAKQ.

Residues 6–82 (TKTFTRAEVA…MKKYKIGELV (77 aa)) enclose the Cytochrome b5 heme-binding domain. 2 residues coordinate heme: histidine 41 and histidine 65. The tract at residues 86–105 (RTSVAQKSEPTWSTEQQTEE) is disordered. A compositionally biased stretch (polar residues) spans 87–105 (TSVAQKSEPTWSTEQQTEE). Residues 111 to 131 (WLVPLVLCLVATLFYKFFFGG) form a helical membrane-spanning segment.

The protein belongs to the cytochrome b5 family.

Its subcellular location is the endoplasmic reticulum membrane. It is found in the microsome membrane. Functionally, cytochrome b5 is a membrane-bound hemoprotein which functions as an electron carrier for several membrane-bound oxygenases. The protein is Cytochrome b5 (Cyt-b5) of Drosophila melanogaster (Fruit fly).